A 200-amino-acid chain; its full sequence is NAD(P)H dehydrogenase (quinone) (200 aa).

In terms of domain architecture, Flavodoxin-like spans 4–191 (VLVLYYSSYG…DIARYQGKHV (188 aa)). FMN contacts are provided by residues 10 to 15 (SSYGHV) and 79 to 81 (TRF). Tyrosine 12 is an NAD(+) binding site. A substrate-binding site is contributed by tryptophan 99. FMN contacts are provided by residues 114–120 (STGTQHG) and histidine 135.

Belongs to the WrbA family. Requires FMN as cofactor.

It catalyses the reaction a quinone + NADH + H(+) = a quinol + NAD(+). It carries out the reaction a quinone + NADPH + H(+) = a quinol + NADP(+). This chain is NAD(P)H dehydrogenase (quinone), found in Burkholderia multivorans (strain ATCC 17616 / 249).